Reading from the N-terminus, the 1086-residue chain is Fused isobutyryl-CoA mutase (1086 aa).

Residues 10–140 (HVRFVTASSL…QGMINVMLEE (131 aa)) enclose the B12-binding domain. H23 is an adenosylcob(III)alamin binding site. Residues 153–407 (LERLPSGDVQ…FVALVDTINK (255 aa)) are GTPase chaperone MeaI. Position 210-215 (210-215 (GAGKSS)) interacts with GTP. The Mg(2+) site is built by S214, V238, D239, and D252. Residue R255 participates in GTP binding. Mg(2+)-binding residues include E300 and T301. Residue 347–350 (NKFE) coordinates GTP. The linker stretch occupies residues 408 to 570 (KAGTNWKTSL…YKENVPGSFP (163 aa)). Substrate contacts are provided by F578, R613, R719, Y763, S812, R847, and K852. Residues E964 and N1085 each contribute to the GTP site.

Belongs to the IcmF family. In terms of assembly, homodimer. Adenosylcob(III)alamin serves as cofactor. Requires Mg(2+) as cofactor.

The catalysed reaction is 2-methylpropanoyl-CoA = butanoyl-CoA. It catalyses the reaction 3-methylbutanoyl-CoA = 2,2-dimethylpropanoyl-CoA. The enzyme catalyses GTP + H2O = GDP + phosphate + H(+). Its function is as follows. Catalyzes the reversible interconversion of isobutyryl-CoA and n-butyryl-CoA, and to a lesser extent, of pivalyl-CoA and isovaleryl-CoA, using radical chemistry. Also exhibits GTPase activity, associated with its G-protein domain (MeaI) that functions as a chaperone that assists cofactor delivery and proper holo-enzyme assembly. Also displays ATPase activity. Is not able to convert 3-hydroxybutyryl-CoA to 2-hydroxyisobutyryl-CoA. Does not exhibit methylmalonyl-CoA mutase (MCM) activity. The chain is Fused isobutyryl-CoA mutase from Geobacillus kaustophilus (strain HTA426).